A 463-amino-acid chain; its full sequence is Chromosomal replication initiator protein DnaA (463 aa).

The interval 1–90 (MSLSLWQQCL…KPLSQIISQT (90 aa)) is domain I, interacts with DnaA modulators. Residues 91 to 126 (VTASVSAPSAPIVRVAAPSRPSWDNAAPQPELSYRS) form a domain II region. The interval 127–343 (NVNPKHTFDN…GALNRVIANA (217 aa)) is domain III, AAA+ region. Residues G171, G173, K174, and T175 each coordinate ATP. The tract at residues 344 to 463 (NFTGRAITID…FSNLIRTLSS (120 aa)) is domain IV, binds dsDNA.

It belongs to the DnaA family. Oligomerizes as a right-handed, spiral filament on DNA at oriC.

The protein resides in the cytoplasm. Plays an essential role in the initiation and regulation of chromosomal replication. ATP-DnaA binds to the origin of replication (oriC) to initiate formation of the DNA replication initiation complex once per cell cycle. Binds the DnaA box (a 9 base pair repeat at the origin) and separates the double-stranded (ds)DNA. Forms a right-handed helical filament on oriC DNA; dsDNA binds to the exterior of the filament while single-stranded (ss)DNA is stabiized in the filament's interior. The ATP-DnaA-oriC complex binds and stabilizes one strand of the AT-rich DNA unwinding element (DUE), permitting loading of DNA polymerase. After initiation quickly degrades to an ADP-DnaA complex that is not apt for DNA replication. Binds acidic phospholipids. The sequence is that of Chromosomal replication initiator protein DnaA from Serratia proteamaculans (strain 568).